Here is a 130-residue protein sequence, read N- to C-terminus: Small ribosomal subunit protein uS9 (130 aa).

It belongs to the universal ribosomal protein uS9 family.

The sequence is that of Small ribosomal subunit protein uS9 from Pseudomonas fluorescens (strain SBW25).